The chain runs to 404 residues: MLRAIAEERGRLSLRREVCGLGCFKDDRIVFWTWMFSTYFMEKLAPRQDDMLFYVRRKRAYTGSESTADGRKAEAEPEVEVEVYRRDSKKLPGLGDPDIDWEESVCLNLILQKLDYMVTCAVCTRADGGDIHIHRKKSQQVFASPSKHPMDSKGEESKMSYPNIFFMIDSFEEVFSDMTVGEGEMVCVELVASDKTNMFQGVIFQGSIRYEALKKVYDNRVSVAARMAQKMSFGFYKYNNMEFVRMKGPQGKGHAEMAVSRVSTGDTSPYGTEDSSPASPMHERVTSFSTPPTPERNNRPAFFSPSLKRKVPRNRIAEMKKSHSANDSEEFFREDDGGADLHNATNLRSRSLSGTGRSLVGSWLKLSRADGNFLLYAHLTYVTLPLHRILTDILEVRQKPILMT.

Residues 262–278 (VSTGDTSPYGTEDSSPA) show a composition bias toward polar residues. 2 disordered regions span residues 262–307 (VSTG…SPSL) and 320–340 (KKSHSANDSEEFFREDDGGAD). Serine 268, serine 276, and serine 279 each carry phosphoserine. Phosphothreonine is present on residues threonine 290 and threonine 293. Serine 304, serine 306, serine 324, serine 358, and serine 362 each carry phosphoserine. The span at 320-336 (KKSHSANDSEEFFREDD) shows a compositional bias: basic and acidic residues.

This is an uncharacterized protein from Rattus norvegicus (Rat).